Reading from the N-terminus, the 284-residue chain is D-tagatose-1,6-bisphosphate aldolase subunit GatY (284 aa).

The active-site Proton donor is the aspartate 82. Residues histidine 83 and histidine 180 each coordinate Zn(2+). Glycine 181 serves as a coordination point for dihydroxyacetone phosphate. Residue histidine 208 participates in Zn(2+) binding. Residues 209–211 (GAS) and 230–233 (NVAT) each bind dihydroxyacetone phosphate.

Belongs to the class II fructose-bisphosphate aldolase family. TagBP aldolase GatY subfamily. Forms a complex with GatZ. Zn(2+) is required as a cofactor.

The enzyme catalyses D-tagatofuranose 1,6-bisphosphate = D-glyceraldehyde 3-phosphate + dihydroxyacetone phosphate. Its pathway is carbohydrate metabolism; D-tagatose 6-phosphate degradation; D-glyceraldehyde 3-phosphate and glycerone phosphate from D-tagatose 6-phosphate: step 2/2. Its function is as follows. Catalytic subunit of the tagatose-1,6-bisphosphate aldolase GatYZ, which catalyzes the reversible aldol condensation of dihydroxyacetone phosphate (DHAP or glycerone-phosphate) with glyceraldehyde 3-phosphate (G3P) to produce tagatose 1,6-bisphosphate (TBP). Requires GatZ subunit for full activity and stability. Is involved in the catabolism of galactitol. The sequence is that of D-tagatose-1,6-bisphosphate aldolase subunit GatY from Escherichia coli O45:K1 (strain S88 / ExPEC).